We begin with the raw amino-acid sequence, 157 residues long: Transcription elongation factor GreA (157 aa).

Positions 47 to 75 form a coiled coil; the sequence is SGEYEDAKKAQALLEGRIRELKHLLSRAE.

This sequence belongs to the GreA/GreB family.

Functionally, necessary for efficient RNA polymerase transcription elongation past template-encoded arresting sites. The arresting sites in DNA have the property of trapping a certain fraction of elongating RNA polymerases that pass through, resulting in locked ternary complexes. Cleavage of the nascent transcript by cleavage factors such as GreA or GreB allows the resumption of elongation from the new 3'terminus. GreA releases sequences of 2 to 3 nucleotides. The sequence is that of Transcription elongation factor GreA from Chloroflexus aurantiacus (strain ATCC 29366 / DSM 635 / J-10-fl).